Consider the following 430-residue polypeptide: Probable dual-specificity RNA methyltransferase RlmN (430 aa).

Residue Glu125 is the Proton acceptor of the active site. The 244-residue stretch at 152 to 395 (RHGRVTLCVS…VTVRDTRGRE (244 aa)) folds into the Radical SAM core domain. An intrachain disulfide couples Cys159 to Cys400. The [4Fe-4S] cluster site is built by Cys166, Cys170, and Cys173. S-adenosyl-L-methionine contacts are provided by residues 221 to 222 (GE), Ser255, 278 to 280 (SLH), and Asn357. Cys400 (S-methylcysteine intermediate) is an active-site residue.

It belongs to the radical SAM superfamily. RlmN family. [4Fe-4S] cluster serves as cofactor.

It is found in the cytoplasm. It carries out the reaction adenosine(2503) in 23S rRNA + 2 reduced [2Fe-2S]-[ferredoxin] + 2 S-adenosyl-L-methionine = 2-methyladenosine(2503) in 23S rRNA + 5'-deoxyadenosine + L-methionine + 2 oxidized [2Fe-2S]-[ferredoxin] + S-adenosyl-L-homocysteine. It catalyses the reaction adenosine(37) in tRNA + 2 reduced [2Fe-2S]-[ferredoxin] + 2 S-adenosyl-L-methionine = 2-methyladenosine(37) in tRNA + 5'-deoxyadenosine + L-methionine + 2 oxidized [2Fe-2S]-[ferredoxin] + S-adenosyl-L-homocysteine. In terms of biological role, specifically methylates position 2 of adenine 2503 in 23S rRNA and position 2 of adenine 37 in tRNAs. In Acidothermus cellulolyticus (strain ATCC 43068 / DSM 8971 / 11B), this protein is Probable dual-specificity RNA methyltransferase RlmN.